The following is a 541-amino-acid chain: Imidazole glycerol phosphate synthase hisHF (541 aa).

A Glutamine amidotransferase type-1 domain is found at 2–214 (IVSIVDYGSG…LTGNYEQPIS (213 aa)). Residues C80, H189, and E191 each act as for GATase activity in the active site. The cyclase stretch occupies residues 228–541 (LTKRIIACLD…LAIHDVLVRT (314 aa)). Residues D237 and D396 contribute to the active site.

This sequence in the C-terminal section; belongs to the HisA/HisF family.

It catalyses the reaction 5-[(5-phospho-1-deoxy-D-ribulos-1-ylimino)methylamino]-1-(5-phospho-beta-D-ribosyl)imidazole-4-carboxamide + L-glutamine = D-erythro-1-(imidazol-4-yl)glycerol 3-phosphate + 5-amino-1-(5-phospho-beta-D-ribosyl)imidazole-4-carboxamide + L-glutamate + H(+). The enzyme catalyses L-glutamine + H2O = L-glutamate + NH4(+). The protein operates within amino-acid biosynthesis; L-histidine biosynthesis; L-histidine from 5-phospho-alpha-D-ribose 1-diphosphate: step 5/9. In terms of biological role, IGPS catalyzes the conversion of PRFAR and glutamine to IGP, AICAR and glutamate. The glutaminase domain produces the ammonia necessary for the cyclase domain to produce IGP and AICAR from PRFAR. The ammonia is channeled to the active site of the cyclase domain. This chain is Imidazole glycerol phosphate synthase hisHF (his4), found in Schizosaccharomyces pombe (strain 972 / ATCC 24843) (Fission yeast).